The primary structure comprises 145 residues: MIKCFDKNNEVYNLIKNLTERLNIEILEVNIFRNKNGGKIQIVLYSKDFSLGIDLLTDLHKMILLILEASLEYSFTLELSTPGIDRRIKSDREFQIFEGKKIKLMLDNEFEEGFILESKSKSFIFKTESKELNVSYSDVKKARLV.

It belongs to the RimP family.

It localises to the cytoplasm. Its function is as follows. Required for maturation of 30S ribosomal subunits. In Borrelia garinii subsp. bavariensis (strain ATCC BAA-2496 / DSM 23469 / PBi) (Borreliella bavariensis), this protein is Ribosome maturation factor RimP.